A 310-amino-acid polypeptide reads, in one-letter code: Methionyl-tRNA formyltransferase (310 aa).

A (6S)-5,6,7,8-tetrahydrofolate-binding site is contributed by 110–113 (SVLP).

It belongs to the Fmt family.

The catalysed reaction is L-methionyl-tRNA(fMet) + (6R)-10-formyltetrahydrofolate = N-formyl-L-methionyl-tRNA(fMet) + (6S)-5,6,7,8-tetrahydrofolate + H(+). Attaches a formyl group to the free amino group of methionyl-tRNA(fMet). The formyl group appears to play a dual role in the initiator identity of N-formylmethionyl-tRNA by promoting its recognition by IF2 and preventing the misappropriation of this tRNA by the elongation apparatus. The polypeptide is Methionyl-tRNA formyltransferase (Mycolicibacterium vanbaalenii (strain DSM 7251 / JCM 13017 / BCRC 16820 / KCTC 9966 / NRRL B-24157 / PYR-1) (Mycobacterium vanbaalenii)).